A 187-amino-acid chain; its full sequence is Putative adenylate kinase (187 aa).

ATP-binding residues include glycine 10, glycine 12, lysine 13, threonine 14, and isoleucine 15. Residues 30–53 form an NMP region; it reads SLSQFVIENKLYTEYDELRQSYII. The interval 103–113 is LID; the sequence is GRGWADIKVAE. Arginine 104 contacts ATP.

This sequence belongs to the adenylate kinase family. AK6 subfamily. Interacts with uS11. Not a structural component of 40S pre-ribosomes, but transiently interacts with them by binding to uS11.

It carries out the reaction AMP + ATP = 2 ADP. It catalyses the reaction ATP + H2O = ADP + phosphate + H(+). In terms of biological role, broad-specificity nucleoside monophosphate (NMP) kinase that catalyzes the reversible transfer of the terminal phosphate group between nucleoside triphosphates and monophosphates. Also has ATPase activity. Involved in the late maturation steps of the 30S ribosomal particles, specifically 16S rRNA maturation. While NMP activity is not required for ribosome maturation, ATPase activity is. Associates transiently with small ribosomal subunit protein uS11. ATP hydrolysis breaks the interaction with uS11. May temporarily remove uS11 from the ribosome to enable a conformational change of the ribosomal RNA that is needed for the final maturation step of the small ribosomal subunit. The sequence is that of Putative adenylate kinase from Saccharolobus islandicus (strain L.S.2.15 / Lassen #1) (Sulfolobus islandicus).